A 228-amino-acid polypeptide reads, in one-letter code: RING1 and YY1-binding protein (228 aa).

Disordered stretches follow at residues 1 to 21, 47 to 157, and 172 to 228; these read MTMG…PAAD, RKGT…STAQ, and DFKE…DESF. A RanBP2-type zinc finger spans residues 21–50; sequence DEGFWDCSVCTFRNSAEAFKCSICDVRKGT. The segment covering 76-98 has biased composition (basic and acidic residues); sequence PKKEKKEKVEKPDKEKPEKDKDI. A Glycyl lysine isopeptide (Lys-Gly) (interchain with G-Cter in SUMO2) cross-link involves residue Lys-77. Ser-99 bears the Phosphoserine mark. Basic and acidic residues predominate over residues 113 to 122; sequence PKSDILKDPP. Ser-123, Ser-127, and Ser-130 each carry phosphoserine. Residues 124–143 show a composition bias toward polar residues; sequence EANSIQSANATTKTSETNHT. The interaction with GABPB1 and FANK1 stretch occupies residues 143–226; it reads TSRPRLKNVD…KGDMSAVNDE (84 aa). Residues 179–204 show a composition bias toward low complexity; it reads SSSTSSSTVTSSAGSEQQNQSSSGSE. Ser-227 carries the phosphoserine modification.

As to quaternary structure, monomer. Component of repressive BCOR complex containing Polycomb group subcomplex at least composed of BCOR, PCGF1, RING1 and RNF2/RING2. Component of PCR1-like complexes. Interacts with PCGF1. Part of a PCR1-like complex that contains AUTS2, PCGF5, RNF2, CSNK2B and RYBP. Interacts with RNF2; the interaction is direct. Interacts with CBX2, YAF2, RING1 and RNF2. Interacts with ubiquitin and ubiquitinated proteins. Interacts with ubiquitinated histone H2A. Interacts with apoptin, DEDD, FADD, CASP8, CASP10, YY1 and GABPB1. Together with GABPB1 and YY1, it forms a ternary complex, probably being the bridge factor between these two transcription factors. Interacts with MDM2, and thereby inhibits ubiquitination of TP53. Identified in a ternary complex containing MDM2, TP53 and RYBP. Interacts with FANK1; may prevent the ubiquitin-mediated proteasomal degradation of FANK1. Interacts with IFT57. Monoubiquitinated. In terms of tissue distribution, expressed in embryonic stem cells.

The protein resides in the nucleus. Its subcellular location is the cytoplasm. It localises to the nucleoplasm. Its function is as follows. Component of a Polycomb group (PcG) multiprotein PRC1-like complex, a complex class required to maintain the transcriptionally repressive state of many genes, including Hox genes, throughout development. PcG PRC1-like complex acts via chromatin remodeling and modification of histones; it mediates monoubiquitination of histone H2A 'Lys-119', rendering chromatin heritably changed in its expressibility. Component of a PRC1-like complex that mediates monoubiquitination of histone H2A 'Lys-119' on the X chromosome and is required for normal silencing of one copy of the X chromosome in XX females. May stimulate ubiquitination of histone H2A 'Lys-119' by recruiting the complex to target sites. Inhibits ubiquitination and subsequent degradation of TP53, and thereby plays a role in regulating transcription of TP53 target genes. May also regulate the ubiquitin-mediated proteasomal degradation of other proteins like FANK1 to regulate apoptosis. May be implicated in the regulation of the transcription as a repressor of the transcriptional activity of E4TF1. May bind to DNA. May play a role in the repression of tumor growth and metastasis in breast cancer by down-regulating SRRM3. This is RING1 and YY1-binding protein (Rybp) from Mus musculus (Mouse).